The primary structure comprises 236 residues: UPF0257 lipoprotein YnfC (236 aa).

Residues 1–16 form the signal peptide; sequence MKYKLLPCLLAILLTG. Cys-17 carries N-palmitoyl cysteine lipidation. Residue Cys-17 is the site of S-diacylglycerol cysteine attachment.

It belongs to the UPF0257 family.

The protein resides in the cell membrane. In Escherichia coli O81 (strain ED1a), this protein is UPF0257 lipoprotein YnfC.